The chain runs to 368 residues: tRNA(Met) cytidine acetate ligase (368 aa).

ATP contacts are provided by residues 7–20 (IAEF…HKYL), Gly96, Asn152, and Arg175.

Belongs to the TmcAL family.

It localises to the cytoplasm. The enzyme catalyses cytidine(34) in elongator tRNA(Met) + acetate + ATP = N(4)-acetylcytidine(34) in elongator tRNA(Met) + AMP + diphosphate. Functionally, catalyzes the formation of N(4)-acetylcytidine (ac(4)C) at the wobble position of elongator tRNA(Met), using acetate and ATP as substrates. First activates an acetate ion to form acetyladenylate (Ac-AMP) and then transfers the acetyl group to tRNA to form ac(4)C34. In Streptococcus pyogenes serotype M28 (strain MGAS6180), this protein is tRNA(Met) cytidine acetate ligase.